Reading from the N-terminus, the 255-residue chain is Uracil-DNA glycosylase (255 aa).

Residue Asp-90 is the Proton acceptor of the active site.

It belongs to the uracil-DNA glycosylase (UDG) superfamily. UNG family.

It is found in the host nucleus. The enzyme catalyses Hydrolyzes single-stranded DNA or mismatched double-stranded DNA and polynucleotides, releasing free uracil.. Its function is as follows. Excises uracil residues from the DNA which can arise as a result of misincorporation of dUMP residues by DNA polymerase or deamination of cytosines. Therefore may reduce deleterious uracil incorporation into the viral genome, particularly in terminally differentiated cells which lack DNA repair enzymes. In Equine herpesvirus 2 (strain 86/87) (EHV-2), this protein is Uracil-DNA glycosylase.